The primary structure comprises 838 residues: DNA gyrase subunit A (838 aa).

Thr2 carries the N-acetylthreonine modification. One can recognise a Topo IIA-type catalytic domain in the interval 41–510 (LPEVRDGLKP…ADGDVSDEDL (470 aa)). Residue Tyr129 is the O-(5'-phospho-DNA)-tyrosine intermediate of the active site. Residues Asp504, Ser506, Glu508, and Asp515 each contribute to the Ca(2+) site. In terms of domain architecture, EF-hand spans 504–516 (DVSDEDLIAREDV). The tract at residues 514–838 (EDVVVTITET…DANGADQTGN (325 aa)) is C-terminal domain CTD. A GyrA-box motif is present at residues 537-543 (QKRGGKG). Residues 743–749 (QGRGGKG) carry the GyrA-box-1 motif.

It belongs to the type II topoisomerase GyrA/ParC subunit family. Heterotetramer, composed of two GyrA and two GyrB chains. In the heterotetramer, GyrA contains the active site tyrosine that forms a transient covalent intermediate with DNA, while GyrB binds cofactors and catalyzes ATP hydrolysis. It depends on Ca(2+) as a cofactor.

It localises to the cytoplasm. The enzyme catalyses ATP-dependent breakage, passage and rejoining of double-stranded DNA.. Its activity is regulated as follows. DNA supercoiling inhibited by (fluoro)quinoline antibiotics such as sparfloxacin and levofloxacin, which usually act on GyrA. DNA supercoiling inhibited by the coumarin antibiotic novobiocin which acts on GyrB. Quinolones lead to gyrase-mediated dsDNA cleavage while preventing reclosure. DNA supercoiling activity inhibited by aminopyrazinamide and pyrrolamide derivatives, probably via effects on the GyrB subunit. DNA relaxation inhibited by ATP and its analogs. DNA supercoiling, relaxation, decatenation and quinolone-promoted DNA cleavage are inhibited by MfpA (50% inhibition occurs at 2 uM), inhibition of gyrase activities is enhanced in a concentration-dependent manner by MfpA. A type II topoisomerase that negatively supercoils closed circular double-stranded (ds) DNA in an ATP-dependent manner to maintain chromosomes in an underwound state, while in the absence of ATP it relaxes supercoiled dsDNA. Also catalyzes the interconversion of other topological isomers of dsDNA rings, including catenanes. Gyrase from M.tuberculosis has higher decatenation than supercoiling activity compared to E.coli; as M.tuberculosis only has 1 type II topoisomerase, gyrase has to fulfill the decatenation function of topoisomerase IV as well. At comparable concentrations M.tuberculosis gyrase cannot introduce as many negative supercoils into DNA as the E.coli enzyme, and its ATPase activity is lower, perhaps because it does not couple DNA wrapping and ATP binding as well as E.coli. Its function is as follows. Negative supercoiling favors strand separation, and DNA replication, transcription, recombination and repair, all of which involve strand separation. Type II topoisomerases break and join 2 DNA strands simultaneously in an ATP-dependent manner. The sequence is that of DNA gyrase subunit A from Mycobacterium tuberculosis (strain ATCC 25618 / H37Rv).